We begin with the raw amino-acid sequence, 79 residues long: Serine protease inhibitor Kazal-type 1-like (79 aa).

A signal peptide spans Met1–Ala23. The region spanning Ile26–Cys79 is the Kazal-like domain. Cystine bridges form between Cys32/Cys61, Cys39/Cys58, and Cys47/Cys79.

As to expression, seminal vesicle.

The protein resides in the secreted. Functionally, serine protease inhibitor which exhibits anti-trypsin activity. In the pancreas, protects against trypsin-catalyzed premature activation of zymogens. In terms of biological role, in the male reproductive tract, binds to sperm heads where it modulates sperm capacitance by inhibiting calcium uptake and nitrogen oxide (NO) production. The protein is Serine protease inhibitor Kazal-type 1-like of Rattus norvegicus (Rat).